A 386-amino-acid polypeptide reads, in one-letter code: F420 non-reducing hydrogenase II small subunit (386 aa).

Residues 1-51 (MVEMSTGMKNLTRTLESMDFLKMDRRTFMKAVSALGATAFLGTYQTEIVNA) constitute a signal peptide (tat-type signal). Residues C67, C70, C178, C227, H273, C276, C296, and C302 each coordinate [4Fe-4S] cluster. The [3Fe-4S] cluster site is built by C311, C330, and C333.

It belongs to the [NiFe]/[NiFeSe] hydrogenase small subunit family. As to quaternary structure, composed of a large subunit (VhtA), a small subunit (VhtG) and a cytochrome subunit (VhtC). [4Fe-4S] cluster serves as cofactor. It depends on [3Fe-4S] cluster as a cofactor. Post-translationally, predicted to be exported by the Tat system. The position of the signal peptide cleavage has not been experimentally proven.

It localises to the cell membrane. The catalysed reaction is methanophenazine + H2 = dihydromethanophenazine. In terms of biological role, part of the F420 non-reducing hydrogenase II complex that catalyzes the reduction of methanophenazine to dihydromethanophenazine. This Methanosarcina mazei (strain ATCC BAA-159 / DSM 3647 / Goe1 / Go1 / JCM 11833 / OCM 88) (Methanosarcina frisia) protein is F420 non-reducing hydrogenase II small subunit.